The chain runs to 210 residues: Somatotropin (210 aa).

Residues 1–22 (MGQVFLLMPVLLVSCFLSHGAA) form the signal peptide. H38 lines the Zn(2+) pocket. A disulfide bridge connects residues C71 and C183. Residue E192 participates in Zn(2+) binding. An intrachain disulfide couples C200 to C208.

This sequence belongs to the somatotropin/prolactin family.

Its subcellular location is the secreted. In terms of biological role, growth hormone plays an important role in growth control and is involved in the regulation of several anabolic processes. Implicated as an osmoregulatory substance important for seawater adaptation. This chain is Somatotropin (gh), found in Oncorhynchus masou (Cherry salmon).